Here is a 742-residue protein sequence, read N- to C-terminus: 5-methyltetrahydropteroyltriglutamate--homocysteine methyltransferase (742 aa).

5-methyltetrahydropteroyltri-L-glutamate-binding positions include 18–21 (REWK) and Lys112. L-homocysteine is bound by residues 420 to 422 (IGS) and Glu473. L-methionine-binding positions include 420-422 (IGS) and Glu473. Trp550 provides a ligand contact to 5-methyltetrahydropteroyltri-L-glutamate. Asp588 is a binding site for L-homocysteine. L-methionine is bound at residue Asp588. Glu594 is a 5-methyltetrahydropteroyltri-L-glutamate binding site. His630, Cys632, and Glu654 together coordinate Zn(2+). His683 (proton donor) is an active-site residue. Zn(2+) is bound at residue Cys715.

The protein belongs to the vitamin-B12 independent methionine synthase family. Zn(2+) serves as cofactor.

The enzyme catalyses 5-methyltetrahydropteroyltri-L-glutamate + L-homocysteine = tetrahydropteroyltri-L-glutamate + L-methionine. Its pathway is amino-acid biosynthesis; L-methionine biosynthesis via de novo pathway; L-methionine from L-homocysteine (MetE route): step 1/1. Its function is as follows. Catalyzes the transfer of a methyl group from 5-methyltetrahydrofolate to homocysteine resulting in methionine formation. In Staphylococcus aureus (strain bovine RF122 / ET3-1), this protein is 5-methyltetrahydropteroyltriglutamate--homocysteine methyltransferase.